Consider the following 233-residue polypeptide: 7-cyano-7-deazaguanine synthase (233 aa).

7 to 17 (LSGGLDSAVTS) provides a ligand contact to ATP. Positions 195, 206, 209, and 212 each coordinate Zn(2+).

This sequence belongs to the QueC family. It depends on Zn(2+) as a cofactor.

It carries out the reaction 7-carboxy-7-deazaguanine + NH4(+) + ATP = 7-cyano-7-deazaguanine + ADP + phosphate + H2O + H(+). It functions in the pathway purine metabolism; 7-cyano-7-deazaguanine biosynthesis. In terms of biological role, catalyzes the ATP-dependent conversion of 7-carboxy-7-deazaguanine (CDG) to 7-cyano-7-deazaguanine (preQ(0)). The protein is 7-cyano-7-deazaguanine synthase of Methanococcus maripaludis (strain DSM 14266 / JCM 13030 / NBRC 101832 / S2 / LL).